We begin with the raw amino-acid sequence, 102 residues long: uncharacterized protein (102 aa).

The segment at 1–41 (MAAPRQIAFYGKGGTGKPKRKPEPVTASKEDRCLGSPSKNK) is disordered.

The protein to the N-terminal of nitrogenase iron protein (NifH). Has lost the ATP-binding site.

Functionally, this protein is either not expressed, expressed at low levels or rapidly degraded. This is an uncharacterized protein from Rhizobium meliloti (Ensifer meliloti).